A 264-amino-acid polypeptide reads, in one-letter code: 3-methyl-2-oxobutanoate hydroxymethyltransferase (264 aa).

Mg(2+) is bound by residues aspartate 45 and aspartate 84. 3-methyl-2-oxobutanoate contacts are provided by residues aspartate 45 to serine 46, aspartate 84, and lysine 112. Glutamate 114 lines the Mg(2+) pocket. The active-site Proton acceptor is glutamate 181.

Belongs to the PanB family. As to quaternary structure, homodecamer; pentamer of dimers. Mg(2+) is required as a cofactor.

Its subcellular location is the cytoplasm. The catalysed reaction is 3-methyl-2-oxobutanoate + (6R)-5,10-methylene-5,6,7,8-tetrahydrofolate + H2O = 2-dehydropantoate + (6S)-5,6,7,8-tetrahydrofolate. Its pathway is cofactor biosynthesis; (R)-pantothenate biosynthesis; (R)-pantoate from 3-methyl-2-oxobutanoate: step 1/2. Functionally, catalyzes the reversible reaction in which hydroxymethyl group from 5,10-methylenetetrahydrofolate is transferred onto alpha-ketoisovalerate to form ketopantoate. This is 3-methyl-2-oxobutanoate hydroxymethyltransferase from Escherichia fergusonii (strain ATCC 35469 / DSM 13698 / CCUG 18766 / IAM 14443 / JCM 21226 / LMG 7866 / NBRC 102419 / NCTC 12128 / CDC 0568-73).